Reading from the N-terminus, the 355-residue chain is Sulfate/thiosulfate import ATP-binding protein CysA (355 aa).

An ABC transporter domain is found at 3 to 233; the sequence is IIINNVSKQF…PASPFVMGFI (231 aa). An ATP-binding site is contributed by 35-42; sequence GPSGSGKS.

This sequence belongs to the ABC transporter superfamily. Sulfate/tungstate importer (TC 3.A.1.6) family. In terms of assembly, the complex is composed of two ATP-binding proteins (CysA), two transmembrane proteins (CysT and CysW) and a solute-binding protein (CysP).

The protein resides in the cell inner membrane. The enzyme catalyses sulfate(out) + ATP + H2O = sulfate(in) + ADP + phosphate + H(+). It catalyses the reaction thiosulfate(out) + ATP + H2O = thiosulfate(in) + ADP + phosphate + H(+). In terms of biological role, part of the ABC transporter complex CysAWTP involved in sulfate/thiosulfate import. Responsible for energy coupling to the transport system. This Synechocystis sp. (strain ATCC 27184 / PCC 6803 / Kazusa) protein is Sulfate/thiosulfate import ATP-binding protein CysA.